Consider the following 374-residue polypeptide: Potassium channel subfamily K member 9 (374 aa).

The Cytoplasmic portion of the chain corresponds to 1–8 (MKRQNVRT). A helical transmembrane segment spans residues 9–29 (LSLIVCTFTYLLVGAAVFDAL). Residues 30 to 88 (ESDHEMREEEKLKAEEIRIKGKYNISSEDYRQLELVILQSEPHRAGVQWKFAGSFYFAI) lie on the Extracellular side of the membrane. Residue Asn-53 is glycosylated (N-linked (GlcNAc...) asparagine). Positions 89–101 (TVITTIGYGHAAP) form an intramembrane region, pore-forming. Residues Thr-93, Ile-94, Gly-95, and Tyr-96 each contribute to the K(+) site. The segment at 93 to 98 (TIGYGH) is selectivity filter 1. The Extracellular portion of the chain corresponds to 102 to 107 (GTDAGK). A helical transmembrane segment spans residues 108-128 (AFCMFYAVLGIPLTLVMFQSL). The Cytoplasmic segment spans residues 129 to 158 (GERMNTFVRYLLKRIKKCCGMRNTDVSMEN). Residues 159–179 (MVTVGFFSCMGTLCIGAAAFS) form a helical membrane-spanning segment. Residues 180–194 (QCEEWSFFHAYYYCF) are Extracellular-facing. The segment at residues 195 to 207 (ITLTTIGFGDYVA) is an intramembrane region (pore-forming). K(+)-binding residues include Thr-199, Ile-200, Gly-201, and Phe-202. Positions 199 to 204 (TIGFGD) are selectivity filter 2. Residues 208-218 (LQTKGALQKKP) lie on the Extracellular side of the membrane. The chain crosses the membrane as a helical span at residues 219-239 (LYVAFSFMYILVGLTVIGAFL). Residues 240-374 (NLVVLRFLTM…QRLMKRRKSV (135 aa)) lie on the Cytoplasmic side of the membrane. Residues 243–248 (VLRFLT) form an X-gate region.

It belongs to the two pore domain potassium channel (TC 1.A.1.8) family. In terms of assembly, homodimer. Heterodimer with KCNK1. Heterodimer with KCNK3. As to expression, mainly found in the cerebellum. Also found in adrenal gland, kidney and lung.

The protein resides in the cell membrane. It localises to the mitochondrion inner membrane. Its subcellular location is the cell projection. It is found in the dendrite. It carries out the reaction K(+)(in) = K(+)(out). It catalyses the reaction Na(+)(in) = Na(+)(out). Its activity is regulated as follows. Inhibited by extracellular acidification adopting a nonconductive conformation at pH 6.0. Inhibited by phorbol 12-myristate 13-acetate (PMA). Functionally, k(+) channel that conducts voltage-dependent outward rectifying currents upon membrane depolarization. Voltage sensing is coupled to K(+) electrochemical gradient in an 'ion flux gating' mode where outward but not inward ion flow opens the gate. Changes ion selectivity and becomes permeable to Na(+) ions in response to extracellular acidification. Protonation of the pH sensor His-98 stabilizes C-type inactivation conformation likely converting the channel from outward K(+)-conducting, to inward Na(+)-conducting to nonconductive state. Homo- and heterodimerizes to form functional channels with distinct regulatory and gating properties. Allows K(+) currents with fast-gating kinetics important for the repolarization and hyperpolarization phases of action potentials. In granule neurons, hyperpolarizes the resting membrane potential to limit intrinsic neuronal excitability, but once the action potential threshold is reached, supports high-frequency action potential firing and increased neuronal excitability. Homomeric and/or heteromeric KCNK3:KCNK9 channels operate in cerebellar granule cells, whereas heteromeric KCNK1:KCNK9 enables currents in hippocampal dentate gyrus granule neurons. Dispensable for central chemosensory respiration i.e. breathing controlled by brainstem CO2/pH, it rather conducts pH-sensitive currents and controls the firing rate of serotonergic raphe neurons involved in potentiation of the respiratory chemoreflex. In retinal ganglion cells, mediates outward currents that regulate action potentials in response to acidification of the synaptic cleft. Involved in transmission of image-forming and nonimage-forming visual information in the retina. In adrenal gland, contributes to the maintenance of a hyperpolarized resting membrane potential of aldosterone-producing cells at zona glomerulosa and limits aldosterone release as part of a regulatory mechanism that controls arterial blood pressure and electrolyte homeostasis. The sequence is that of Potassium channel subfamily K member 9 from Homo sapiens (Human).